The primary structure comprises 255 residues: MASHVIVKFITAAILIGSCYANYCDQSLCRRGPHVACNAPTQFGSACGQEPKFVKMDARMKNLLLKKHNELRAEIACGKHGFPQAARMPTLVWDDELAHIASFNARKCIFAHDKCRNTREFKFAGQNLAITAFAGYNFQAADRAENFTQEWFNEHKDCPKSYVDSYPMSHSGPQIGHFTQMVNDRAWKMGCSMVHYKNGRVIKYYLVCNYSMTNMIEEPIYTRGSAGSKCQTGQNPQYRGLCSPREKVRSESYRG.

A signal peptide spans 1-21; sequence MASHVIVKFITAAILIGSCYA. The region spanning 65–210 is the SCP domain; sequence LKKHNELRAE…VIKYYLVCNY (146 aa). 2 N-linked (GlcNAc...) asparagine glycosylation sites follow: Asn146 and Asn209.

It belongs to the CRISP family. In terms of assembly, interacts with human LRPPRC; the interaction interrupts association between BECN1 and LRPPRC. Interacts with human CD4. (Microbial infection) Interacts with Zika virus envelope protein E and Zika virus-like particles; the interaction does not affect Zika virus replication in human endothelial cells and keratinocytes. As to expression, saliva (at protein level). Female salivary gland. No or low-level expression in female hemolymph, midgut, Malpighian tubule system and ovary. No or low-level expression in male tissues.

Its subcellular location is the secreted. The protein localises to the host endosome. It localises to the host mitochondrion. Functionally, activates autophagy in human monocytic cells, dendritic cells and macrophages. Promotes activation of human CD4(+) T-cells. Does not affect cytokine expression in human monocytic cells. Its function is as follows. (Microbial infection) Promotes dengue virus type 2 replication in human monocytic cells, dendritic cells and macrophages. Pro-viral properties are linked to BECN1-mediated autophagy activation in the host. Does not directly interact with the purified envelope protein of dengue virus type 2. (Microbial infection) Promotes Zika virus replication in human monocytic cells, dendritic cells and macrophages. Facilitates Zika virus transmission from infected mosquitoes to the host in mouse model. Pro-viral properties are linked to BECN1-mediated autophagy activation in the host. Does not affect Zika virus replication in human endothelial cells and keratinocytes. In terms of biological role, (Microbial infection) Promotes Semliki Forest virus replication in human monocytic cells. Functionally, (Microbial infection) Does not influence Batai virus replication in human monocytic cells. The protein is Venom allergen-1 of Aedes aegypti (Yellowfever mosquito).